Consider the following 441-residue polypeptide: Peroxisome proliferator-activated receptor delta (441 aa).

The segment at 1 to 58 (MEQPPGEAAEVREEEEKKEVAEAEGAPELNGGPERSLPSSSYTDLSRSSSPPSLLDQL) is disordered. Positions 9-21 (AEVREEEEKKEVA) are enriched in basic and acidic residues. Residues 36–55 (SLPSSSYTDLSRSSSPPSLL) are compositionally biased toward low complexity. Positions 70–145 (LNMECRVCGD…LGMSHNAIRF (76 aa)) form a DNA-binding region, nuclear receptor. 2 consecutive NR C4-type zinc fingers follow at residues 74–94 (CRVC…CEGC) and 111–133 (CERI…FQKC). In terms of domain architecture, NR LBD spans 211–439 (FVIHDIETLW…HPLLQEIYKD (229 aa)).

It belongs to the nuclear hormone receptor family. NR1 subfamily. As to quaternary structure, heterodimer with the retinoid X receptor. Interacts (via domain NR LBD) with CRY1 and CRY2 in a ligand-dependent manner. 'Lys-48'-linked polyubiquitinated; leading to proteasomal degradation. Deubiquitinated and stabilized by OTUD3.

It localises to the nucleus. Its function is as follows. Ligand-activated transcription factor key mediator of energy metabolism in adipose tissues. Receptor that binds peroxisome proliferators such as hypolipidemic drugs and fatty acids. Has a preference for poly-unsaturated fatty acids, such as gamma-linoleic acid and eicosapentanoic acid. Once activated by a ligand, the receptor binds to promoter elements of target genes. Regulates the peroxisomal beta-oxidation pathway of fatty acids. Functions as a transcription activator for the acyl-CoA oxidase gene. Decreases expression of NPC1L1 once activated by a ligand. The polypeptide is Peroxisome proliferator-activated receptor delta (PPARD) (Canis lupus familiaris (Dog)).